Reading from the N-terminus, the 295-residue chain is G1/S-specific cyclin-D1 (295 aa).

The Cyclin N-terminal domain maps to 28–152 (LRAMLKAEET…LLVNKLKWNL (125 aa)). The segment at 264 to 295 (QQSLDPKAAEEEEEEEEADLACTPTDVRDVNI) is disordered. Residue K270 forms a Glycyl lysine isopeptide (Lys-Gly) (interchain with G-Cter in ubiquitin) linkage. Residues 273–282 (EEEEEEEEAD) are compositionally biased toward acidic residues. At T286 the chain carries Phosphothreonine.

It belongs to the cyclin family. Cyclin D subfamily. In terms of assembly, interacts with either CDK4 or CDK6 protein kinase to form a serine/threonine kinase holoenzyme complex. The cyclin subunit imparts substrate specificity to the complex. Component of the ternary complex CCND1/CDK4/CDKN1B required for nuclear translocation and modulation of CDK4-mediated kinase activity. Interacts directly with CDKN1B. Can form similar complexes with either CDKN1A or CDKN2A. Interacts with UHRF2; the interaction ubiquitinates CCND1 and appears to occur independently of phosphorylation. Interacts with USP2. Interacts (via cyclin N-terminal domain) with INSM1 (via N-terminal region); the interaction competes with the binding of CCND1 to CDK4 during cell cycle progression and inhibits CDK4 activity. Interacts with CDK4; the interaction is prevented with the binding of CCND1 to INSM1 during cell cycle progression. Post-translationally, phosphorylation at Thr-286 by MAP kinases is required for ubiquitination and degradation by the DCX(AMBRA1) complex. It also plays an essential role for recognition by the FBXO31 component of SCF (SKP1-cullin-F-box) protein ligase complex following DNA damage. In terms of processing, ubiquitinated at Lys-270 by the DCX(AMBRA1) complex during the transition from G1 to S cell phase, leading to its degradation: ubiquitination is dependent on Thr-286 phosphorylation. The DCX(AMBRA1) complex represents the major regulator of CCND1 stability during the G1/S transition. Also ubiquitinated by the SCF(FBXO4) and Cul7-RING(FBXW8) ubiquitin-protein ligase complexes. Following DNA damage it is ubiquitinated by the SCF(FBXO31) protein ligase complex. SCF(FBXO31) ubiquitination is dependent on Thr-286 phosphorylation. Ubiquitinated also by UHRF2 apparently in a phosphorylation-independent manner. Ubiquitination leads to its degradation and G1 arrest. Deubiquitinated by USP2; leading to its stabilization.

Its subcellular location is the nucleus. The protein localises to the cytoplasm. The protein resides in the nucleus membrane. In terms of biological role, regulatory component of the cyclin D1-CDK4 (DC) complex that phosphorylates and inhibits members of the retinoblastoma (RB) protein family including RB1 and regulates the cell-cycle during G(1)/S transition. Phosphorylation of RB1 allows dissociation of the transcription factor E2F from the RB/E2F complex and the subsequent transcription of E2F target genes which are responsible for the progression through the G(1) phase. Hypophosphorylates RB1 in early G(1) phase. Cyclin D-CDK4 complexes are major integrators of various mitogenenic and antimitogenic signals. Also a substrate for SMAD3, phosphorylating SMAD3 in a cell-cycle-dependent manner and repressing its transcriptional activity. Component of the ternary complex, cyclin D1/CDK4/CDKN1B, required for nuclear translocation and activity of the cyclin D-CDK4 complex. Exhibits transcriptional corepressor activity with INSM1 on the NEUROD1 and INS promoters in a cell cycle-independent manner. In Canis lupus familiaris (Dog), this protein is G1/S-specific cyclin-D1 (CCND1).